Here is a 1220-residue protein sequence, read N- to C-terminus: DNA-directed RNA polymerase subunit beta' (1220 aa).

Zn(2+) is bound by residues cysteine 60, cysteine 62, cysteine 75, and cysteine 78. Positions 449, 451, and 453 each coordinate Mg(2+). Residues cysteine 818, cysteine 892, cysteine 899, and cysteine 902 each coordinate Zn(2+).

The protein belongs to the RNA polymerase beta' chain family. The RNAP catalytic core consists of 2 alpha, 1 beta, 1 beta' and 1 omega subunit. When a sigma factor is associated with the core the holoenzyme is formed, which can initiate transcription. Requires Mg(2+) as cofactor. Zn(2+) is required as a cofactor.

It carries out the reaction RNA(n) + a ribonucleoside 5'-triphosphate = RNA(n+1) + diphosphate. Functionally, DNA-dependent RNA polymerase catalyzes the transcription of DNA into RNA using the four ribonucleoside triphosphates as substrates. The polypeptide is DNA-directed RNA polymerase subunit beta' (Lacticaseibacillus paracasei (strain ATCC 334 / BCRC 17002 / CCUG 31169 / CIP 107868 / KCTC 3260 / NRRL B-441) (Lactobacillus paracasei)).